The following is a 23-amino-acid chain: Thylakoid lumenal 17.4 kDa protein (23 aa).

The interval alanine 1 to threonine 23 is disordered.

It is found in the plastid. The protein localises to the chloroplast thylakoid lumen. The sequence is that of Thylakoid lumenal 17.4 kDa protein from Spinacia oleracea (Spinach).